We begin with the raw amino-acid sequence, 79 residues long: MDNIEQRVKKIVAEQLGVAEAEIKNEASFVNDLGADSLDTVELVMALEDEFGMEIPDEEAEKITTVQQAIDYARANVKA.

The 76-residue stretch at 2-77 (DNIEQRVKKI…QAIDYARANV (76 aa)) folds into the Carrier domain. Residue Ser-37 is modified to O-(pantetheine 4'-phosphoryl)serine.

The protein belongs to the acyl carrier protein (ACP) family. 4'-phosphopantetheine is transferred from CoA to a specific serine of apo-ACP by AcpS. This modification is essential for activity because fatty acids are bound in thioester linkage to the sulfhydryl of the prosthetic group.

It is found in the cytoplasm. Its pathway is lipid metabolism; fatty acid biosynthesis. Carrier of the growing fatty acid chain in fatty acid biosynthesis. The protein is Acyl carrier protein of Burkholderia cenocepacia (strain HI2424).